Consider the following 225-residue polypeptide: Cytidylate kinase (225 aa).

An ATP-binding site is contributed by glycine 11–threonine 19.

Belongs to the cytidylate kinase family. Type 1 subfamily.

The protein localises to the cytoplasm. It carries out the reaction CMP + ATP = CDP + ADP. The catalysed reaction is dCMP + ATP = dCDP + ADP. This is Cytidylate kinase from Bacillus cytotoxicus (strain DSM 22905 / CIP 110041 / 391-98 / NVH 391-98).